A 471-amino-acid chain; its full sequence is BPI fold-containing family B member 1 (471 aa).

Residues 1-18 (MTNPWIVSLLLGATLVQA) form the signal peptide. N-linked (GlcNAc...) asparagine glycosylation is found at N150, N157, N260, and N397. A disulfide bond links C154 and C197.

Belongs to the BPI/LBP/Plunc superfamily. Plunc family.

It localises to the secreted. In terms of biological role, may play a role in innate immunity in mouth, nose and lungs. Binds bacterial lipopolysaccharide (LPS) and modulates the cellular responses to LPS. The protein is BPI fold-containing family B member 1 (Bpifb1) of Rattus norvegicus (Rat).